A 292-amino-acid chain; its full sequence is MITGSIVAIVTPMHEDGSLDFPRLRSLIDWHVAEGTDGIVIVGTTGESPTVSVDEHCELIRVAVEHAAGRIPVIAGTGANSTAEAIALARYAQQAGAVAHLSVVPYYNRPSQEGLYQHFRSVAEAVELPLILYNVPGRTVADLSNDTALRLAEIPNIIGLKDATGSIDRACDLIERAPEGFALYSGDDMTVAAFILLGGHGTISVTANVAPRAMHEMCAAALAGDAAKARTINARLVGLHRHLFCEANPIPVKWAVQRMGLVEGGLRLPLTPLAESFHDRVLTAMRQAGIQA.

Thr-45 contributes to the pyruvate binding site. Tyr-133 (proton donor/acceptor) is an active-site residue. The active-site Schiff-base intermediate with substrate is Lys-161. Pyruvate is bound at residue Ile-203.

The protein belongs to the DapA family. Homotetramer; dimer of dimers.

Its subcellular location is the cytoplasm. The catalysed reaction is L-aspartate 4-semialdehyde + pyruvate = (2S,4S)-4-hydroxy-2,3,4,5-tetrahydrodipicolinate + H2O + H(+). The protein operates within amino-acid biosynthesis; L-lysine biosynthesis via DAP pathway; (S)-tetrahydrodipicolinate from L-aspartate: step 3/4. Its function is as follows. Catalyzes the condensation of (S)-aspartate-beta-semialdehyde [(S)-ASA] and pyruvate to 4-hydroxy-tetrahydrodipicolinate (HTPA). The protein is 4-hydroxy-tetrahydrodipicolinate synthase of Azoarcus sp. (strain BH72).